Here is an 828-residue protein sequence, read N- to C-terminus: Glycerol-3-phosphate acyltransferase (828 aa).

Residues 309–314 (CHRSHI) carry the HXXXXD motif motif.

The protein belongs to the GPAT/DAPAT family.

The protein resides in the cell inner membrane. The catalysed reaction is sn-glycerol 3-phosphate + an acyl-CoA = a 1-acyl-sn-glycero-3-phosphate + CoA. The protein operates within phospholipid metabolism; CDP-diacylglycerol biosynthesis; CDP-diacylglycerol from sn-glycerol 3-phosphate: step 1/3. This Pseudomonas putida (strain W619) protein is Glycerol-3-phosphate acyltransferase.